Here is a 314-residue protein sequence, read N- to C-terminus: Nucleotide-binding protein CE1710 (314 aa).

The interval 1 to 29 is disordered; sequence MNQTPGSTVPETATPVTSPASSPSAPETT. The segment covering 7–29 has biased composition (low complexity); that stretch reads STVPETATPVTSPASSPSAPETT. 37–44 is an ATP binding site; that stretch reads GMSGAGLS. 88–91 provides a ligand contact to GTP; that stretch reads DVRS.

Belongs to the RapZ-like family.

Displays ATPase and GTPase activities. The protein is Nucleotide-binding protein CE1710 of Corynebacterium efficiens (strain DSM 44549 / YS-314 / AJ 12310 / JCM 11189 / NBRC 100395).